Here is a 281-residue protein sequence, read N- to C-terminus: Transcription factor LBX1 (281 aa).

Basic and acidic residues predominate over residues 1 to 20 (MTSKEDGKAAPGEERRRSPL). A disordered region spans residues 1–35 (MTSKEDGKAAPGEERRRSPLDHLPPPANSNKPLTP). Residues 125-184 (RRKSRTAFTNHQIYELEKRFLYQKYLSPADRDQIAQQLGLTNAQVITWFQNRRAKLKRDL) constitute a DNA-binding region (homeobox). The disordered stretch occupies residues 214–281 (NSEATAGGGG…EEDEEIDVDD (68 aa)). The segment covering 253-267 (SPASPLTDQPASSQD) has biased composition (polar residues). A compositionally biased stretch (acidic residues) spans 268 to 281 (CSEDEEDEEIDVDD).

Interacts with SKOR1 which acts as a transcriptional corepressor.

It is found in the nucleus. Its function is as follows. Transcription factor required for the development of GABAergic interneurons in the dorsal horn of the spinal cord and migration and further development of hypaxial muscle precursor cells for limb muscles, diaphragm and hypoglossal cord. The chain is Transcription factor LBX1 (LBX1) from Homo sapiens (Human).